We begin with the raw amino-acid sequence, 268 residues long: Zinc finger protein SNAI2 (268 aa).

The tract at residues 1–20 (MPRSFLVKKHFNASKKPNYS) is SNAG domain. The tract at residues 80 to 117 (PASLGRVSPPPPSDTSSKDHSGSESPISDEEERLQSKL) is disordered. C2H2-type zinc fingers lie at residues 128-150 (FQCNLCNKTYSTFSGLGKHKQLH), 159-181 (FSCKYCDKEYVSLGALKMHIRTH), 185-207 (CVCKICGKAFSRPWLLQGHIRTH), and 213-235 (FSCSHCSRAFADRSNLRAHLQTH). The C2H2-type 5; atypical zinc finger occupies 241–264 (YQCKSCSKTFSRMSLLHKHEESGC).

It belongs to the snail C2H2-type zinc-finger protein family. In terms of assembly, interacts (via SNAG domain) with LIMD1 (via LIM domains), WTIP (via LIM domains) and AJUBA (via LIM domains). Interacts (via zinc fingers) with KPNA2, KPNB1, and TNPO1. May interact (via zinc fingers) with IPO7. Post-translationally, phosphorylated by GSK3B. Once phosphorylated, it becomes a target for ubiquitination. Ubiquitinated by the SCF(FBXO11) complex; ubiquitination requires previous GSK3B-mediated SNAI2 phosphorylation.

It is found in the nucleus. It localises to the cytoplasm. Transcriptional repressor that modulates both activator-dependent and basal transcription. Involved in the generation and migration of neural crest cells. Plays a role in mediating RAF1-induced transcriptional repression of the TJ protein, occludin (OCLN) and subsequent oncogenic transformation of epithelial cells. Represses BRCA2 expression by binding to its E2-box-containing silencer and recruiting CTBP1 and HDAC1 in breast cells. In epidermal keratinocytes, binds to the E-box in ITGA3 promoter and represses its transcription. Involved in the regulation of ITGB1 and ITGB4 expression and cell adhesion and proliferation in epidermal keratinocytes. Binds to E-box2 domain of BSG and activates its expression during TGFB1-induced epithelial-mesenchymal transition (EMT) in hepatocytes. Represses E-Cadherin/CDH1 transcription via E-box elements. Involved in osteoblast maturation. Binds to RUNX2 and SOC9 promoters and may act as a positive and negative transcription regulator, respectively, in osteoblasts. Binds to CXCL12 promoter via E-box regions in mesenchymal stem cells and osteoblasts. Plays an essential role in TWIST1-induced EMT and its ability to promote invasion and metastasis. This Bos taurus (Bovine) protein is Zinc finger protein SNAI2 (SNAI2).